Reading from the N-terminus, the 99-residue chain is Cytochrome c oxidase subunit 4 isoform 1, mitochondrial (99 aa).

Residues 1–73 (SVVKREDFSL…TFAEMNRGSN (73 aa)) lie on the Mitochondrial matrix side of the membrane. An N6-acetyllysine; alternate modification is found at lysine 4. Lysine 4 bears the N6-succinyllysine; alternate mark. Lysine 28 carries the post-translational modification N6-acetyllysine. 2 positions are modified to phosphoserine: serine 31 and serine 33. Lysine 35 carries the N6-acetyllysine; alternate modification. Lysine 35 is modified (N6-succinyllysine; alternate). Position 42 is an N6-acetyllysine (lysine 42). Residues 74–99 (EWKTVVGTATFFIGFTALIIMWQKRY) traverse the membrane as a helical segment.

Belongs to the cytochrome c oxidase IV family. As to quaternary structure, component of the cytochrome c oxidase (complex IV, CIV), a multisubunit enzyme composed of 14 subunits. The complex is composed of a catalytic core of 3 subunits MT-CO1, MT-CO2 and MT-CO3, encoded in the mitochondrial DNA, and 11 supernumerary subunits COX4I, COX5A, COX5B, COX6A, COX6B, COX6C, COX7A, COX7B, COX7C, COX8 and NDUFA4, which are encoded in the nuclear genome. The complex exists as a monomer or a dimer and forms supercomplexes (SCs) in the inner mitochondrial membrane with NADH-ubiquinone oxidoreductase (complex I, CI) and ubiquinol-cytochrome c oxidoreductase (cytochrome b-c1 complex, complex III, CIII), resulting in different assemblies (supercomplex SCI(1)III(2)IV(1) and megacomplex MCI(2)III(2)IV(2)). Interacts with PHB2; the interaction decreases in absence of SPHK2. Interacts with AFG1L. Interacts with ABCB7; this interaction allows the regulation of cellular iron homeostasis and cellular reactive oxygen species (ROS) levels in cardiomyocytes. Interacts with FLVCR2; this interaction occurs in the absence of heme and is disrupted upon heme binding. Interacts with IRGC.

It localises to the mitochondrion inner membrane. It functions in the pathway energy metabolism; oxidative phosphorylation. Functionally, component of the cytochrome c oxidase, the last enzyme in the mitochondrial electron transport chain which drives oxidative phosphorylation. The respiratory chain contains 3 multisubunit complexes succinate dehydrogenase (complex II, CII), ubiquinol-cytochrome c oxidoreductase (cytochrome b-c1 complex, complex III, CIII) and cytochrome c oxidase (complex IV, CIV), that cooperate to transfer electrons derived from NADH and succinate to molecular oxygen, creating an electrochemical gradient over the inner membrane that drives transmembrane transport and the ATP synthase. Cytochrome c oxidase is the component of the respiratory chain that catalyzes the reduction of oxygen to water. Electrons originating from reduced cytochrome c in the intermembrane space (IMS) are transferred via the dinuclear copper A center (CU(A)) of subunit 2 and heme A of subunit 1 to the active site in subunit 1, a binuclear center (BNC) formed by heme A3 and copper B (CU(B)). The BNC reduces molecular oxygen to 2 water molecules using 4 electrons from cytochrome c in the IMS and 4 protons from the mitochondrial matrix. This chain is Cytochrome c oxidase subunit 4 isoform 1, mitochondrial (COX4I1), found in Trachypithecus cristatus (Silvered leaf-monkey).